We begin with the raw amino-acid sequence, 385 residues long: Chaperone protein DnaJ (385 aa).

The region spanning 5-70 (DYYEILEITR…SKRQIYDKYG (66 aa)) is the J domain. The segment at 136-213 (GCKKEIHNSF…CKGSGFEISE (78 aa)) adopts a CR-type zinc-finger fold. Positions 149, 152, 165, 168, 187, 190, 201, and 204 each coordinate Zn(2+). CXXCXGXG motif repeat units lie at residues 149 to 156 (CSDCKGTG), 165 to 172 (CKDCGGKG), 187 to 194 (CPTCKGEG), and 201 to 208 (CSKCKGSG).

It belongs to the DnaJ family. In terms of assembly, homodimer. Zn(2+) is required as a cofactor.

Its subcellular location is the cytoplasm. Functionally, participates actively in the response to hyperosmotic and heat shock by preventing the aggregation of stress-denatured proteins and by disaggregating proteins, also in an autonomous, DnaK-independent fashion. Unfolded proteins bind initially to DnaJ; upon interaction with the DnaJ-bound protein, DnaK hydrolyzes its bound ATP, resulting in the formation of a stable complex. GrpE releases ADP from DnaK; ATP binding to DnaK triggers the release of the substrate protein, thus completing the reaction cycle. Several rounds of ATP-dependent interactions between DnaJ, DnaK and GrpE are required for fully efficient folding. Also involved, together with DnaK and GrpE, in the DNA replication of plasmids through activation of initiation proteins. The chain is Chaperone protein DnaJ from Helicobacter hepaticus (strain ATCC 51449 / 3B1).